The primary structure comprises 500 residues: MSLATTNSVAEIRARNKELIEEVLKVYPEKTAKRRAKHLNVHQAGKSDCGVKSNIKSIPGVMTIRGCAYAGSKGVVWGPIKDMVHISHGPVGCGQYSWGSRRNYYVGTTGIDSFVTLQFTSDFQEKDIVFGGDKKLDKILDEIQELFPLNNGITIQSECPVGLIGDDIEAVSRAKSKEYGGKTIVPVRCEGFRGVSQSLGHHIANDAVRDWIFGHIEAEGKPKFEPTPYDVAIIGDYNIGGDAWSSRILLEEMGLRVIAQWSGDGSLAELEATPKAKLNILHCYRSMNYISRHMEEKFGIPWCEYNFFGPSKIADSLRRIAGYFDDKIKEGAERVIEKYQPLVDAVIAKYRPRLEGKTVMLYVGGLRPRHVIGAYEDLGMDVIGTGYEFGHNDDYQRTAQHYVKDSTLIYDDVNGYEFERFVEKLQPDLVGSGIKEKYVFQKMSVPFRQMHSWDYSGPYHGYDGFAIFARDMDMAVNSPIWKRTKAPWKEAPSAKLQAAE.

C67, C93, and C159 together coordinate [8Fe-7S] cluster. Residues C283 and H451 each contribute to the [7Fe-Mo-9S-C-homocitryl] cluster site.

It belongs to the NifD/NifK/NifE/NifN family. In terms of assembly, tetramer of two alpha and two beta chains. Forms complex with the iron protein (nitrogenase component 2). [8Fe-7S] cluster is required as a cofactor. It depends on [7Fe-Mo-9S-C-homocitryl] cluster as a cofactor.

It catalyses the reaction N2 + 8 reduced [2Fe-2S]-[ferredoxin] + 16 ATP + 16 H2O = H2 + 8 oxidized [2Fe-2S]-[ferredoxin] + 2 NH4(+) + 16 ADP + 16 phosphate + 6 H(+). This molybdenum-iron protein is part of the nitrogenase complex that catalyzes the key enzymatic reactions in nitrogen fixation. The protein is Nitrogenase molybdenum-iron protein alpha chain (nifD) of Bradyrhizobium diazoefficiens (strain JCM 10833 / BCRC 13528 / IAM 13628 / NBRC 14792 / USDA 110).